The following is a 900-amino-acid chain: 3'-5' exonuclease DinG (900 aa).

The Exonuclease domain occupies 8–161 (VVDLETTGNQ…DEDATTTALL (154 aa)). One can recognise a Helicase ATP-binding domain in the interval 241–496 (SEVVKSLNLT…KAIDKLEQQR (256 aa)). 276–283 (APLGSGKS) is a binding site for ATP. Positions 448–451 (DEAH) match the DEAH box motif. Positions 713 to 893 (DYIQEYVTIT…QFSKLVNKIQ (181 aa)) constitute a Helicase C-terminal domain.

The protein belongs to the helicase family. DinG subfamily. Type 2 sub-subfamily.

Its function is as follows. 3'-5' exonuclease. The protein is 3'-5' exonuclease DinG of Staphylococcus haemolyticus (strain JCSC1435).